The following is a 282-amino-acid chain: MNRIILPSPAKLNLFLYINGRRADGYHQLQTLFQFLDVGDEIDISITTSNSTIELVNDIAGVATEDNLIYRAAKLLQKKTACQQGAKIAVAKHLPMGGGVGGGSSNAATVLVGLNYLWQTGLSLAQLAELGLSLGADVPIFVAGKTAFAEGIGEILTPCELPEKWYLVLKPNISIETSSIFKDPKLPRNTPERSLSALLAEDWGNDCEKVVREHYSEVEDLIQELLQYAPFRLTGTGACIFAEFASKAEAEKVFNCRPHNMYGFVAKGQNISPLHKKLNLFS.

Residue Lys-11 is part of the active site. 95–105 (PMGGGVGGGSS) contacts ATP. Residue Asp-137 is part of the active site.

Belongs to the GHMP kinase family. IspE subfamily.

The catalysed reaction is 4-CDP-2-C-methyl-D-erythritol + ATP = 4-CDP-2-C-methyl-D-erythritol 2-phosphate + ADP + H(+). Its pathway is isoprenoid biosynthesis; isopentenyl diphosphate biosynthesis via DXP pathway; isopentenyl diphosphate from 1-deoxy-D-xylulose 5-phosphate: step 3/6. Functionally, catalyzes the phosphorylation of the position 2 hydroxy group of 4-diphosphocytidyl-2C-methyl-D-erythritol. This is 4-diphosphocytidyl-2-C-methyl-D-erythritol kinase from Haemophilus ducreyi (strain 35000HP / ATCC 700724).